Reading from the N-terminus, the 95-residue chain is Protein TusB (95 aa).

Belongs to the DsrH/TusB family. Heterohexamer, formed by a dimer of trimers. The hexameric TusBCD complex contains 2 copies each of TusB, TusC and TusD. The TusBCD complex interacts with TusE.

It is found in the cytoplasm. In terms of biological role, part of a sulfur-relay system required for 2-thiolation of 5-methylaminomethyl-2-thiouridine (mnm(5)s(2)U) at tRNA wobble positions. This is Protein TusB from Salmonella agona (strain SL483).